The sequence spans 883 residues: NF-X1-type zinc finger protein NFXL2 (883 aa).

Over residues 1-10 (MTNMAGTATT) the composition is skewed to polar residues. The segment at 1 to 44 (MTNMAGTATTEFRWKSPPQPPSQEQPISDSDSDSGSDSENHQHR) is disordered. The segment at 87–152 (CLICLERIKR…EAVWNCPKCR (66 aa)) adopts an RING-type; degenerate zinc-finger fold. 11 consecutive NF-X1-type zinc fingers follow at residues 198-216 (CGHC…SCPK), 250-269 (CNIH…PCRE), 303-322 (CGKH…LCPY), 357-377 (CGYH…TCRI), 410-429 (CARH…PCSE), 437-456 (CRNH…PCPI), 494-515 (CRHG…PCRL), 523-568 (CGHK…RCPE), 605-636 (CGNH…KCDL), 646-664 (CQHP…PCKT), and 709-738 (CTHL…RCKC). Positions 798 to 824 (EIEEKEEPSGKNASKRRKRRGRGQDIQ) are disordered. A helical transmembrane segment spans residues 841–863 (MVVMLVAMLAAVSYYGYKGLLWL).

The protein belongs to the NFX1 family. Interacts with ADO1/ZTL. As to expression, constitutively expressed in mesophyll and guard cells.

It is found in the nucleus. Its subcellular location is the membrane. It participates in protein modification; protein ubiquitination. Functionally, probable transcriptional regulator. May mediate E2- or E3-dependent ubiquitination. Required to gate light sensitivity during the night. Regulates the speed of the clock by acting in the feedback loop between CCA1, LHY and APRR1/TOC1. Promotes the expression of CCA1 at night but not by days. This activational effect is enhanced by interaction with ADO1/ZTL. Association with ADO1/ZTL is not leading to the degradation of NFXL2. Confers sensitivity to osmotic stress such as high salinity. Prevents H(2)O(2) production and abscisic acid accumulation. Part of a regulatory network that integrates the biosynthesis and action of abscisic acid, reactive oxygen species and cuticle components. This Arabidopsis thaliana (Mouse-ear cress) protein is NF-X1-type zinc finger protein NFXL2 (NFXL2).